The following is a 532-amino-acid chain: uncharacterized protein (532 aa).

5 consecutive transmembrane segments (helical) span residues 11–31 (YLSHGLVIHMIINGIVLALII), 51–71 (IEPFVLLVLMELISGIQKIFF), 126–146 (LIDILTYQSSHLFAFIGYTLW), 147–167 (ILYNSPITLTIYILLIPIIVF), and 231–253 (YVESINLAITLLTRFNLLIVLLI). Positions 315–531 (ICINKLVYEY…MIIPMNNGII (217 aa)) constitute an ABC transporter domain. ATP is bound at residue 349–356 (GKSGSGKS).

The protein resides in the membrane. This is an uncharacterized protein from Acanthamoeba polyphaga mimivirus (APMV).